The primary structure comprises 95 residues: Cliotide T5 (95 aa).

The cyclopeptide (Gly-Asn) cross-link spans Gly1–Asn30. Cystine bridges form between Cys4-Cys20, Cys8-Cys22, and Cys13-Cys27. Residues His31 to Asn95 constitute a propeptide, removed in mature form.

Post-translationally, contains 3 disulfide bonds. In terms of processing, this is a cyclic peptide. As to expression, expressed in stem, shoot, root, leaf, pod and nodule but not in flower and seed (at protein level).

Functionally, probably participates in a plant defense mechanism. This chain is Cliotide T5, found in Clitoria ternatea (Butterfly pea).